We begin with the raw amino-acid sequence, 732 residues long: Zinc-exporting P-type ATPase (732 aa).

An HMA domain is found at 29 to 96 (GRMRVRADWV…AIGGAKHVAA (68 aa)). 6 consecutive transmembrane segments (helical) span residues 105-123 (HSTE…GGAA), 146-164 (MVAT…RGAL), 172-186 (AGTD…IASL), 195-209 (LTVL…YLQD), 342-366 (VGEN…LVTG), and 372-390 (MTML…TPTA). Asp-423 acts as the 4-aspartylphosphate intermediate in catalysis. Asp-423, Thr-425, and Asp-625 together coordinate Mg(2+). Transmembrane regions (helical) follow at residues 676–695 (AVDV…AAGL) and 705–724 (PVLA…ANSS).

Belongs to the cation transport ATPase (P-type) (TC 3.A.3) family. Type IB subfamily.

The protein resides in the cell membrane. It carries out the reaction Zn(2+)(in) + ATP + H2O = Zn(2+)(out) + ADP + phosphate + H(+). Functionally, zn(2+) efflux transporter which is involved in detoxification of zinc during infection. This is Zinc-exporting P-type ATPase from Mycobacterium marinum (strain ATCC BAA-535 / M).